The primary structure comprises 134 residues: Small ribosomal subunit protein uS9 (134 aa).

Residues R113–R134 are disordered. Basic residues predominate over residues Y120–R134.

It belongs to the universal ribosomal protein uS9 family.

This is Small ribosomal subunit protein uS9 (rpsI) from Thermotoga maritima (strain ATCC 43589 / DSM 3109 / JCM 10099 / NBRC 100826 / MSB8).